The sequence spans 93 residues: uncharacterized protein (93 aa).

3 helical membrane passes run 9-29 (ITVI…PQLI), 40-60 (ISLA…IYGI), and 66-86 (PIIV…YLKI).

Its subcellular location is the cell membrane. This is an uncharacterized protein from Methanocaldococcus jannaschii (strain ATCC 43067 / DSM 2661 / JAL-1 / JCM 10045 / NBRC 100440) (Methanococcus jannaschii).